The chain runs to 439 residues: Agmatine coumaroyltransferase-1 (439 aa).

Catalysis depends on proton acceptor residues histidine 152 and aspartate 385.

It belongs to the plant acyltransferase family. In terms of assembly, monomer.

It carries out the reaction 4-coumaroyl-CoA + agmatine = N-(4-guanidinobutyl)-4-hydroxycinnamamide + CoA + H(+). Inhibited by DEPC. Completely inhibited by ZnSO(4), strongly inhibited by CuSO(4), partially inhibited by MnCl(2). Unaffected by MgCl(2) or CaCl(2). Functionally, involved in the synthesis of hordatines (antifungal hydroxycinnamoylagmatine derivatives). Specific for agmatine as the acyl acceptor, inactive towards tyramine and putrescine. Has activity with the acyl donors 4-coumaroyl-CoA, cinnamoyl-CoA, caffeoyl-CoA, feruloyl-CoA, and to a lesser extent sinapoyl-CoA. The chain is Agmatine coumaroyltransferase-1 (ACT-1) from Hordeum vulgare (Barley).